The chain runs to 456 residues: Histidine--tRNA ligase (456 aa).

It belongs to the class-II aminoacyl-tRNA synthetase family. Homodimer.

It localises to the cytoplasm. The enzyme catalyses tRNA(His) + L-histidine + ATP = L-histidyl-tRNA(His) + AMP + diphosphate + H(+). In Borreliella afzelii (strain PKo) (Borrelia afzelii), this protein is Histidine--tRNA ligase.